The sequence spans 737 residues: Polyribonucleotide nucleotidyltransferase (737 aa).

Mg(2+) contacts are provided by Asp489 and Asp495. The KH domain maps to 556-615 (PKIDTIKIDVDKIKIVIGKGGETIDKIIAETGVKIDIDEEGNVSIYSSDQDAINRAKEII). The region spanning 625-693 (DEVYRAKVVR…EKGRIDASMK (69 aa)) is the S1 motif domain. Residues 691-737 (SMKALLPRPPKPEHDEKGEKSERPHRPRHHKDHKPKKEFTETPKDSE) are disordered. Residues 700–714 (PKPEHDEKGEKSERP) are compositionally biased toward basic and acidic residues. Residues 715-724 (HRPRHHKDHK) show a composition bias toward basic residues. Residues 725–737 (PKKEFTETPKDSE) are compositionally biased toward basic and acidic residues.

It belongs to the polyribonucleotide nucleotidyltransferase family. Mg(2+) serves as cofactor.

Its subcellular location is the cytoplasm. The enzyme catalyses RNA(n+1) + phosphate = RNA(n) + a ribonucleoside 5'-diphosphate. Its function is as follows. Involved in mRNA degradation. Catalyzes the phosphorolysis of single-stranded polyribonucleotides processively in the 3'- to 5'-direction. The sequence is that of Polyribonucleotide nucleotidyltransferase from Streptococcus pneumoniae (strain ATCC 700669 / Spain 23F-1).